The sequence spans 889 residues: Chromatin structure-remodeling complex subunit RSC2 (889 aa).

The region spanning 12–120 (QNSSALYKDL…KYLKDTIYPN (109 aa)) is the Bromo 1 domain. The tract at residues 151–268 (EKAEEVARAN…QVSRTQVKRG (118 aa)) is disordered. A compositionally biased stretch (low complexity) spans 158-174 (RANAARAESSSSMNSTE). Acidic residues predominate over residues 197 to 209 (NNDEDYEATDMDI). Residues 210-222 (DNPKDADFPDLIR) are compositionally biased toward basic and acidic residues. The segment covering 241–250 (STTPSHSGTP) has biased composition (polar residues). The span at 255–268 (PRHRQVSRTQVKRG) shows a compositional bias: basic residues. A Bromo 2 domain is found at 280–382 (RMKNVMKVLK…KTFTSLARFE (103 aa)). In terms of domain architecture, BAH spans 408–526 (ISYHVGDWAL…ESDKIFNKIR (119 aa)). Positions 601-624 (GEYATSDDCPRYIIRPNDSPEEGQ) are disordered. Position 612 is a phosphotyrosine (Y612). S682 carries the post-translational modification Phosphoserine. The tract at residues 831-865 (EVEETMEDVTGKDKDDDGLEPDVENEKESLPGPFV) is disordered.

It belongs to the RSC1 family. Component of the two forms of the RSC complex composed of at least either RSC1 or RSC2, and ARP7, ARP9, LDB7, NPL6, RSC3, RSC30, RSC4, RSC58, RSC6, RSC8, RSC9, SFH1, STH1, HTL1 and probably RTT102. The complexes interact with histone and histone variant components of centromeric chromatin.

The protein resides in the nucleus. In terms of biological role, component of the chromatin structure remodeling complex (RSC), which is involved in transcription regulation and nucleosome positioning. RSC is responsible for the transfer of a histone octamer from a nucleosome core particle to naked DNA. The reaction requires ATP and involves an activated RSC-nucleosome intermediate. Remodeling reaction also involves DNA translocation, DNA twist and conformational change. As a reconfigurer of centromeric and flanking nucleosomes, RSC complex is required both for proper kinetochore function in chromosome segregation and, via a PKC1-dependent signaling pathway, for organization of the cellular cytoskeleton. This subunit is involved in meiotic sporulation through regulating IME2 expression, and is also essential for 2-micron plasmid maintenance and for normal REP1 protein localization. This chain is Chromatin structure-remodeling complex subunit RSC2 (RSC2), found in Saccharomyces cerevisiae (strain ATCC 204508 / S288c) (Baker's yeast).